A 231-amino-acid chain; its full sequence is Large ribosomal subunit protein uL1 (231 aa).

It belongs to the universal ribosomal protein uL1 family. Part of the 50S ribosomal subunit.

Binds directly to 23S rRNA. The L1 stalk is quite mobile in the ribosome, and is involved in E site tRNA release. Functionally, protein L1 is also a translational repressor protein, it controls the translation of the L11 operon by binding to its mRNA. The chain is Large ribosomal subunit protein uL1 from Neisseria meningitidis serogroup C (strain 053442).